We begin with the raw amino-acid sequence, 298 residues long: Foldase protein PrsA 1 (298 aa).

An N-terminal signal peptide occupies residues 1-19; that stretch reads MKKWLIALAGVLLTFTLAG. C20 carries N-palmitoyl cysteine lipidation. C20 carries S-diacylglycerol cysteine lipidation. Residues 136 to 232 enclose the PpiC domain; it reads EPKVTVQHIL…NGYEIIRMIK (97 aa).

The protein belongs to the PrsA family.

Its subcellular location is the cell membrane. It catalyses the reaction [protein]-peptidylproline (omega=180) = [protein]-peptidylproline (omega=0). Plays a major role in protein secretion by helping the post-translocational extracellular folding of several secreted proteins. The chain is Foldase protein PrsA 1 (prsA1) from Lactiplantibacillus plantarum (strain ATCC BAA-793 / NCIMB 8826 / WCFS1) (Lactobacillus plantarum).